We begin with the raw amino-acid sequence, 163 residues long: D-aminoacyl-tRNA deacylase (163 aa).

The Gly-cisPro motif, important for rejection of L-amino acids motif lies at 141–142 (GP).

This sequence belongs to the DTD family. In terms of assembly, homodimer.

It localises to the cytoplasm. The enzyme catalyses glycyl-tRNA(Ala) + H2O = tRNA(Ala) + glycine + H(+). It carries out the reaction a D-aminoacyl-tRNA + H2O = a tRNA + a D-alpha-amino acid + H(+). Functionally, an aminoacyl-tRNA editing enzyme that deacylates mischarged D-aminoacyl-tRNAs. Also deacylates mischarged glycyl-tRNA(Ala), protecting cells against glycine mischarging by AlaRS. Acts via tRNA-based rather than protein-based catalysis; rejects L-amino acids rather than detecting D-amino acids in the active site. By recycling D-aminoacyl-tRNA to D-amino acids and free tRNA molecules, this enzyme counteracts the toxicity associated with the formation of D-aminoacyl-tRNA entities in vivo and helps enforce protein L-homochirality. This Neisseria gonorrhoeae (strain ATCC 700825 / FA 1090) protein is D-aminoacyl-tRNA deacylase.